The following is a 328-amino-acid chain: RNA binding protein fox-1 homolog 3 (328 aa).

Residues 1–30 (MAQPYPPAQYPPPPQNGIPAEYAPPPPHPT) show a composition bias toward pro residues. The tract at residues 1–106 (MAQPYPPAQY…QPKRLHVSNI (106 aa)) is disordered. The segment covering 49-87 (TPAQTHPEQPSSDTSTQPITGAQTVPQTDEAAQTDSQPL) has biased composition (polar residues). One can recognise an RRM domain in the interval 99 to 172 (KRLHVSNIPF…NPVVGAVYGP (74 aa)). The residue at position 192 (R192) is an Asymmetric dimethylarginine; alternate. Omega-N-methylarginine; alternate is present on R192. R288 bears the Asymmetric dimethylarginine mark.

Its subcellular location is the nucleus. The protein resides in the cytoplasm. Its function is as follows. Pre-mRNA alternative splicing regulator. Regulates alternative splicing of RBFOX2 to enhance the production of mRNA species that are targeted for nonsense-mediated decay (NMD). The chain is RNA binding protein fox-1 homolog 3 (RBFOX3) from Bos taurus (Bovine).